A 1316-amino-acid polypeptide reads, in one-letter code: DNA-directed RNA polymerase subunit beta' (1316 aa).

Residues C60, C62, C75, and C78 each contribute to the Zn(2+) site. D535, D537, and D539 together coordinate Mg(2+). Zn(2+) contacts are provided by C891, C968, C975, and C978.

This sequence belongs to the RNA polymerase beta' chain family. In terms of assembly, the RNAP catalytic core consists of 2 alpha, 1 beta, 1 beta' and 1 omega subunit. When a sigma factor is associated with the core the holoenzyme is formed, which can initiate transcription. Mg(2+) serves as cofactor. Zn(2+) is required as a cofactor.

It catalyses the reaction RNA(n) + a ribonucleoside 5'-triphosphate = RNA(n+1) + diphosphate. Its function is as follows. DNA-dependent RNA polymerase catalyzes the transcription of DNA into RNA using the four ribonucleoside triphosphates as substrates. This chain is DNA-directed RNA polymerase subunit beta', found in Mycobacterium bovis (strain BCG / Pasteur 1173P2).